The sequence spans 595 residues: MAPRKTKPATKPAAKPTPASTATTSSCPSPKSFPIPMEVDDFSFSDSELSDAQSLIEPEGFSLLSPDESSGGRSQDELPPARKKRRVAGPKERRTQHLDLTPRLGFSDYGDQEPQLNLLVNTIRNHKKIVVIAGAGISTSAGIPDFRSDDGLFKTLQKKHNLKASGKLMFDAAVYQDEALTASFQEMVRSLSEEAEKSSPTAFHHMLARLGSDNRLTRLYTQNIDGIETSMPPLATQIPLNVKAPWPRTIQLHGSLEKMVCQKCRHMSTFDRVMFDRPDAPECPECVLTNQFRMETGQRSHGIGKMRPRIVLYNEHNPDEEAITSVMNADIRSRPDALIVVGTSLKIPGVRRLVKSLCSVIRSRRNGVTMWINNEPPSGKEFEDCFDLLVKGDCEEVARLAQLKRWDDDSKPIFDECQSADVERVKNEQGPLSVVITTPKKEKVQAQTGMLTPSSSYDGDVENASTTTLSNPASKGRKLTEILKASKKDAPKTESAGVKKPAPRKRTKKEPVKNAKITTFSKVTKAQKVTPEEKSVKLEEHKAMHPLPPGAARTNAPMLPGLAKDDSKSTPSGKRGQLETISPDRIPKGMGKLLD.

The interval 1–106 (MAPRKTKPAT…HLDLTPRLGF (106 aa)) is disordered. The segment covering 9-32 (ATKPAAKPTPASTATTSSCPSPKS) has biased composition (low complexity). In terms of domain architecture, Deacetylase sirtuin-type spans 109–428 (YGDQEPQLNL…SADVERVKNE (320 aa)). NAD(+) is bound by residues 134–153 (GAGISTSAGIPDFRSDDGLF) and 222–225 (QNID). Residue His253 is the Proton acceptor of the active site. Zn(2+)-binding residues include Cys261, Cys264, Cys283, and Cys286. NAD(+) is bound by residues 342–344 (GTS), 373–375 (NNE), and Cys394. The segment covering 445-473 (QAQTGMLTPSSSYDGDVENASTTTLSNPA) has biased composition (polar residues). The interval 445–595 (QAQTGMLTPS…IPKGMGKLLD (151 aa)) is disordered. Basic and acidic residues-rich tracts occupy residues 478-492 (KLTEILKASKKDAPK) and 530-543 (TPEEKSVKLEEHKA).

It belongs to the sirtuin family. Class I subfamily. Zn(2+) serves as cofactor.

It localises to the nucleus. It carries out the reaction N(6)-acetyl-L-lysyl-[protein] + NAD(+) + H2O = 2''-O-acetyl-ADP-D-ribose + nicotinamide + L-lysyl-[protein]. Its function is as follows. NAD-dependent histone deacetylase, which could function in telomeric silencing, cell cycle progression and chromosome stability. In Emericella nidulans (strain FGSC A4 / ATCC 38163 / CBS 112.46 / NRRL 194 / M139) (Aspergillus nidulans), this protein is NAD-dependent protein deacetylase hst4.